The chain runs to 739 residues: NAD(P)H-quinone oxidoreductase subunit 5, chloroplastic (739 aa).

16 consecutive transmembrane segments (helical) span residues 9 to 29 (WIIP…LLLF), 40 to 60 (WSFQ…NLSI), 89 to 109 (IDPL…MVLI), 125 to 145 (FAYM…SNLI), 147 to 167 (IYIF…FWFT), 184 to 204 (IGDF…GSFE), 224 to 244 (LFVT…SAQF), 258 to 278 (TPIS…FLVA), 289 to 311 (YIMN…LALA), 318 to 338 (GLAF…GMGS), 354 to 374 (ALLF…VGYS), 396 to 416 (NTFL…CFWS), 427 to 447 (YSTI…FYIF), 546 to 566 (LFPL…GIPF), 605 to 625 (VSSV…YKPP), and 718 to 738 (ISSY…VFFI).

It belongs to the complex I subunit 5 family. In terms of assembly, NDH is composed of at least 16 different subunits, 5 of which are encoded in the nucleus.

The protein localises to the plastid. It is found in the chloroplast thylakoid membrane. The catalysed reaction is a plastoquinone + NADH + (n+1) H(+)(in) = a plastoquinol + NAD(+) + n H(+)(out). It catalyses the reaction a plastoquinone + NADPH + (n+1) H(+)(in) = a plastoquinol + NADP(+) + n H(+)(out). NDH shuttles electrons from NAD(P)H:plastoquinone, via FMN and iron-sulfur (Fe-S) centers, to quinones in the photosynthetic chain and possibly in a chloroplast respiratory chain. The immediate electron acceptor for the enzyme in this species is believed to be plastoquinone. Couples the redox reaction to proton translocation, and thus conserves the redox energy in a proton gradient. This chain is NAD(P)H-quinone oxidoreductase subunit 5, chloroplastic (ndhF), found in Coffea arabica (Arabian coffee).